We begin with the raw amino-acid sequence, 158 residues long: NAD(P)H-quinone oxidoreductase subunit J, chloroplastic (158 aa).

It belongs to the complex I 30 kDa subunit family. In terms of assembly, NDH is composed of at least 16 different subunits, 5 of which are encoded in the nucleus.

Its subcellular location is the plastid. The protein localises to the chloroplast thylakoid membrane. The catalysed reaction is a plastoquinone + NADH + (n+1) H(+)(in) = a plastoquinol + NAD(+) + n H(+)(out). It carries out the reaction a plastoquinone + NADPH + (n+1) H(+)(in) = a plastoquinol + NADP(+) + n H(+)(out). Functionally, NDH shuttles electrons from NAD(P)H:plastoquinone, via FMN and iron-sulfur (Fe-S) centers, to quinones in the photosynthetic chain and possibly in a chloroplast respiratory chain. The immediate electron acceptor for the enzyme in this species is believed to be plastoquinone. Couples the redox reaction to proton translocation, and thus conserves the redox energy in a proton gradient. This is NAD(P)H-quinone oxidoreductase subunit J, chloroplastic from Chloranthus spicatus (Chulantree).